The sequence spans 347 residues: UDP-3-O-acylglucosamine N-acyltransferase (347 aa).

Histidine 241 (proton acceptor) is an active-site residue.

The protein belongs to the transferase hexapeptide repeat family. LpxD subfamily. Homotrimer.

It carries out the reaction a UDP-3-O-[(3R)-3-hydroxyacyl]-alpha-D-glucosamine + a (3R)-hydroxyacyl-[ACP] = a UDP-2-N,3-O-bis[(3R)-3-hydroxyacyl]-alpha-D-glucosamine + holo-[ACP] + H(+). Its pathway is bacterial outer membrane biogenesis; LPS lipid A biosynthesis. Functionally, catalyzes the N-acylation of UDP-3-O-acylglucosamine using 3-hydroxyacyl-ACP as the acyl donor. Is involved in the biosynthesis of lipid A, a phosphorylated glycolipid that anchors the lipopolysaccharide to the outer membrane of the cell. The protein is UDP-3-O-acylglucosamine N-acyltransferase of Neisseria gonorrhoeae (strain ATCC 700825 / FA 1090).